Reading from the N-terminus, the 171-residue chain is UPF0312 protein SAV2687 (171 aa).

It belongs to the UPF0312 family.

This chain is UPF0312 protein SAV2687, found in Staphylococcus aureus (strain Mu50 / ATCC 700699).